A 102-amino-acid polypeptide reads, in one-letter code: MYAIVRSGGRQHKVAVGDVVEIDKVADEAGSSIELTPLLVVDGESVTSDKDVLGKVKVTAEVLGETKGPKIRILKYKNKTGYKKRQGHRQKYTQVKVTGIEG.

This sequence belongs to the bacterial ribosomal protein bL21 family. In terms of assembly, part of the 50S ribosomal subunit. Contacts protein L20.

This protein binds to 23S rRNA in the presence of protein L20. The sequence is that of Large ribosomal subunit protein bL21 from Cutibacterium acnes (strain DSM 16379 / KPA171202) (Propionibacterium acnes).